Reading from the N-terminus, the 364-residue chain is Lipoyl synthase, chloroplastic (364 aa).

Residues 1–70 constitute a chloroplast transit peptide; the sequence is MEQTLFNPSI…PNVKKPEWLR (70 aa). Low complexity predominate over residues 32–52; the sequence is STNSPSSNTKTTTVTVPSKKT. The interval 32-64 is disordered; it reads STNSPSSNTKTTTVTVPSKKTMGPYTGRDPNVK. Positions 95, 100, 106, 126, 130, 133, and 341 each coordinate [4Fe-4S] cluster. The Radical SAM core domain maps to 109 to 330; it reads GGGDGIATAT…KEYGESIGFR (222 aa).

Belongs to the radical SAM superfamily. Lipoyl synthase family. The cofactor is [4Fe-4S] cluster.

The protein localises to the plastid. It is found in the chloroplast. It catalyses the reaction [[Fe-S] cluster scaffold protein carrying a second [4Fe-4S](2+) cluster] + N(6)-octanoyl-L-lysyl-[protein] + 2 oxidized [2Fe-2S]-[ferredoxin] + 2 S-adenosyl-L-methionine + 4 H(+) = [[Fe-S] cluster scaffold protein] + N(6)-[(R)-dihydrolipoyl]-L-lysyl-[protein] + 4 Fe(3+) + 2 hydrogen sulfide + 2 5'-deoxyadenosine + 2 L-methionine + 2 reduced [2Fe-2S]-[ferredoxin]. The protein operates within protein modification; protein lipoylation via endogenous pathway; protein N(6)-(lipoyl)lysine from octanoyl-[acyl-carrier-protein]: step 2/2. Catalyzes the radical-mediated insertion of two sulfur atoms into the C-6 and C-8 positions of the octanoyl moiety bound to the lipoyl domains of lipoate-dependent enzymes, thereby converting the octanoylated domains into lipoylated derivatives. In Ricinus communis (Castor bean), this protein is Lipoyl synthase, chloroplastic.